The sequence spans 397 residues: Elongation factor Tu (397 aa).

One can recognise a tr-type G domain in the interval 10-207 (KPHVNIGTIG…AVDESIPDPV (198 aa)). Positions 19 to 26 (GHVDHGKT) are G1. GTP is bound at residue 19–26 (GHVDHGKT). Threonine 26 serves as a coordination point for Mg(2+). The segment at 63 to 67 (GITIN) is G2. The tract at residues 84–87 (DAPG) is G3. Residues 84-88 (DAPGH) and 139-142 (NKAD) each bind GTP. Positions 139–142 (NKAD) are G4. Positions 177-179 (SGL) are G5.

It belongs to the TRAFAC class translation factor GTPase superfamily. Classic translation factor GTPase family. EF-Tu/EF-1A subfamily. As to quaternary structure, monomer.

The protein resides in the cytoplasm. It catalyses the reaction GTP + H2O = GDP + phosphate + H(+). Functionally, GTP hydrolase that promotes the GTP-dependent binding of aminoacyl-tRNA to the A-site of ribosomes during protein biosynthesis. The sequence is that of Elongation factor Tu from Tropheryma whipplei (strain Twist) (Whipple's bacillus).